Consider the following 77-residue polypeptide: Acyl carrier protein (77 aa).

In terms of domain architecture, Carrier spans 2-77; that stretch reads ADTLERVTKI…DAVNYIQNQQ (76 aa). Serine 37 carries the O-(pantetheine 4'-phosphoryl)serine modification.

This sequence belongs to the acyl carrier protein (ACP) family. 4'-phosphopantetheine is transferred from CoA to a specific serine of apo-ACP by AcpS. This modification is essential for activity because fatty acids are bound in thioester linkage to the sulfhydryl of the prosthetic group.

The protein localises to the cytoplasm. It functions in the pathway lipid metabolism; fatty acid biosynthesis. Its function is as follows. Carrier of the growing fatty acid chain in fatty acid biosynthesis. In Bacillus subtilis (strain 168), this protein is Acyl carrier protein (acpA).